Consider the following 341-residue polypeptide: S-adenosylmethionine:tRNA ribosyltransferase-isomerase (341 aa).

The protein belongs to the QueA family. In terms of assembly, monomer.

It is found in the cytoplasm. It carries out the reaction 7-aminomethyl-7-carbaguanosine(34) in tRNA + S-adenosyl-L-methionine = epoxyqueuosine(34) in tRNA + adenine + L-methionine + 2 H(+). It participates in tRNA modification; tRNA-queuosine biosynthesis. Functionally, transfers and isomerizes the ribose moiety from AdoMet to the 7-aminomethyl group of 7-deazaguanine (preQ1-tRNA) to give epoxyqueuosine (oQ-tRNA). The polypeptide is S-adenosylmethionine:tRNA ribosyltransferase-isomerase (Clostridium perfringens (strain ATCC 13124 / DSM 756 / JCM 1290 / NCIMB 6125 / NCTC 8237 / Type A)).